The chain runs to 558 residues: CTP synthase (558 aa).

The segment at 1 to 267 is amidoligase domain; sequence MTKFVFVTGG…AQQTLELLNL (267 aa). Ser-13 contacts CTP. UTP is bound at residue Ser-13. ATP is bound by residues 14-19 and Asp-71; that span reads SIGKGI. 2 residues coordinate Mg(2+): Asp-71 and Glu-141. Residues 148 to 150, 188 to 193, and Lys-224 contribute to the CTP site; these read DIE and KTKPTQ. UTP-binding positions include 188 to 193 and Lys-224; that span reads KTKPTQ. A Glutamine amidotransferase type-1 domain is found at 292-534; that stretch reads EVALVGKYVQ…VKASVDYNHV (243 aa). Gly-354 is a binding site for L-glutamine. The Nucleophile; for glutamine hydrolysis role is filled by Cys-381. L-glutamine-binding positions include 382 to 385, Glu-405, and Arg-462; that span reads MGMQ. Catalysis depends on residues His-507 and Glu-509.

The protein belongs to the CTP synthase family. In terms of assembly, homotetramer.

It carries out the reaction UTP + L-glutamine + ATP + H2O = CTP + L-glutamate + ADP + phosphate + 2 H(+). The catalysed reaction is L-glutamine + H2O = L-glutamate + NH4(+). The enzyme catalyses UTP + NH4(+) + ATP = CTP + ADP + phosphate + 2 H(+). It functions in the pathway pyrimidine metabolism; CTP biosynthesis via de novo pathway; CTP from UDP: step 2/2. Its activity is regulated as follows. Allosterically activated by GTP, when glutamine is the substrate; GTP has no effect on the reaction when ammonia is the substrate. The allosteric effector GTP functions by stabilizing the protein conformation that binds the tetrahedral intermediate(s) formed during glutamine hydrolysis. Inhibited by the product CTP, via allosteric rather than competitive inhibition. Catalyzes the ATP-dependent amination of UTP to CTP with either L-glutamine or ammonia as the source of nitrogen. Regulates intracellular CTP levels through interactions with the four ribonucleotide triphosphates. This chain is CTP synthase, found in Gloeothece citriformis (strain PCC 7424) (Cyanothece sp. (strain PCC 7424)).